The primary structure comprises 165 residues: NADPH-dependent 7-cyano-7-deazaguanine reductase (165 aa).

Catalysis depends on Cys-56, which acts as the Thioimide intermediate. Residue Asp-63 is the Proton donor of the active site. Substrate contacts are provided by residues Val-78 to Ser-80 and His-97 to Glu-98.

The protein belongs to the GTP cyclohydrolase I family. QueF type 1 subfamily.

Its subcellular location is the cytoplasm. It carries out the reaction 7-aminomethyl-7-carbaguanine + 2 NADP(+) = 7-cyano-7-deazaguanine + 2 NADPH + 3 H(+). Its pathway is tRNA modification; tRNA-queuosine biosynthesis. With respect to regulation, is totally inhibited by 4-aminobenzylcyanide in vitro. Catalyzes the NADPH-dependent reduction of 7-cyano-7-deazaguanine (preQ0) to 7-aminomethyl-7-deazaguanine (preQ1), a late step in the queuosine pathway. Is highly specific for its natural substrate preQ0, since it cannot use various aliphatic, aromatic and heterocyclic nitriles, although it can reduce the substrate analog 5-cyanopyrrolo[2,3-d]pyrimidin-4-one with lesser efficiency. This chain is NADPH-dependent 7-cyano-7-deazaguanine reductase, found in Geobacillus kaustophilus (strain HTA426).